We begin with the raw amino-acid sequence, 337 residues long: Inositol 2-dehydrogenase (337 aa).

This sequence belongs to the Gfo/Idh/MocA family. In terms of assembly, homotetramer.

It carries out the reaction myo-inositol + NAD(+) = scyllo-inosose + NADH + H(+). Functionally, involved in the oxidation of myo-inositol (MI) to 2-keto-myo-inositol (2KMI or 2-inosose). The chain is Inositol 2-dehydrogenase from Burkholderia cenocepacia (strain HI2424).